Consider the following 493-residue polypeptide: 3-octaprenyl-4-hydroxybenzoate carboxy-lyase (493 aa).

Asn-172 contacts Mn(2+). Prenylated FMN is bound by residues 175–177, 189–191, and 194–195; these read IYR, RWL, and RG. Glu-238 serves as a coordination point for Mn(2+). Asp-287 (proton donor) is an active-site residue.

The protein belongs to the UbiD family. In terms of assembly, homohexamer. Prenylated FMN serves as cofactor. The cofactor is Mn(2+).

It is found in the cell membrane. It catalyses the reaction a 4-hydroxy-3-(all-trans-polyprenyl)benzoate + H(+) = a 2-(all-trans-polyprenyl)phenol + CO2. It functions in the pathway cofactor biosynthesis; ubiquinone biosynthesis. Functionally, catalyzes the decarboxylation of 3-octaprenyl-4-hydroxy benzoate to 2-octaprenylphenol, an intermediate step in ubiquinone biosynthesis. The sequence is that of 3-octaprenyl-4-hydroxybenzoate carboxy-lyase from Shewanella woodyi (strain ATCC 51908 / MS32).